Here is a 719-residue protein sequence, read N- to C-terminus: Polyribonucleotide nucleotidyltransferase (719 aa).

Residues Asp490 and Asp496 each coordinate Mg(2+). Positions 557–619 (PKIEIIIIPK…KSIDAALTRI (63 aa)) constitute a KH domain. The 71-residue stretch at 629–699 (GEIYEGKIRS…KTGKFKLSHK (71 aa)) folds into the S1 motif domain.

Belongs to the polyribonucleotide nucleotidyltransferase family. Mg(2+) is required as a cofactor.

The protein resides in the cytoplasm. It carries out the reaction RNA(n+1) + phosphate = RNA(n) + a ribonucleoside 5'-diphosphate. In terms of biological role, involved in mRNA degradation. Catalyzes the phosphorolysis of single-stranded polyribonucleotides processively in the 3'- to 5'-direction. This Azobacteroides pseudotrichonymphae genomovar. CFP2 protein is Polyribonucleotide nucleotidyltransferase.